We begin with the raw amino-acid sequence, 223 residues long: PKHD-type hydroxylase syc1482_d (223 aa).

In terms of domain architecture, Fe2OG dioxygenase spans 78-176 (RVHSLLFSRY…RFACVGWVQS (99 aa)). 3 residues coordinate Fe cation: His96, Asp98, and His157. Arg167 is a binding site for 2-oxoglutarate.

Fe(2+) is required as a cofactor. It depends on L-ascorbate as a cofactor.

This chain is PKHD-type hydroxylase syc1482_d, found in Synechococcus sp. (strain ATCC 27144 / PCC 6301 / SAUG 1402/1) (Anacystis nidulans).